The following is a 340-amino-acid chain: Zinc finger protein 488 (340 aa).

The important for transcriptional repression activity stretch occupies residues 72–187; it reads AELALLVAPG…SVFPAGESAD (116 aa). Residues 77–180 form a disordered region; the sequence is LVAPGKPRPG…AERPELTSVF (104 aa). Residues 82-91 are compositionally biased toward pro residues; it reads KPRPGKPLPP. The segment covering 106–125 has biased composition (basic and acidic residues); that stretch reads PRMKDRQVDAQAQEREHDDP. 2 C2H2-type zinc fingers span residues 275–302 and 317–339; these read NWCA…KKEH and LACP…MTSH. The Nuclear localization signal signature appears at 298-305; that stretch reads HKKEHAGP.

The protein belongs to the krueppel C2H2-type zinc-finger protein family. As to quaternary structure, interacts with OLIG2.

The protein localises to the nucleus. Transcriptional repressor. Plays a role in oligodendrocyte differentiation, together with OLIG2. Mediates Notch signaling-activated formation of oligodendrocyte precursors. Promotes differentiation of adult neural stem progenitor cells (NSPCs) into mature oligodendrocytes and contributes to remyelination following nerve injury. This Homo sapiens (Human) protein is Zinc finger protein 488 (ZNF488).